Reading from the N-terminus, the 300-residue chain is 4-hydroxy-tetrahydrodipicolinate synthase (300 aa).

Threonine 49 is a binding site for pyruvate. Catalysis depends on tyrosine 137, which acts as the Proton donor/acceptor. Lysine 165 functions as the Schiff-base intermediate with substrate in the catalytic mechanism. Isoleucine 207 serves as a coordination point for pyruvate.

The protein belongs to the DapA family. Homotetramer; dimer of dimers.

The protein localises to the cytoplasm. It catalyses the reaction L-aspartate 4-semialdehyde + pyruvate = (2S,4S)-4-hydroxy-2,3,4,5-tetrahydrodipicolinate + H2O + H(+). The protein operates within amino-acid biosynthesis; L-lysine biosynthesis via DAP pathway; (S)-tetrahydrodipicolinate from L-aspartate: step 3/4. Catalyzes the condensation of (S)-aspartate-beta-semialdehyde [(S)-ASA] and pyruvate to 4-hydroxy-tetrahydrodipicolinate (HTPA). In Nitrosospira multiformis (strain ATCC 25196 / NCIMB 11849 / C 71), this protein is 4-hydroxy-tetrahydrodipicolinate synthase.